The following is a 145-amino-acid chain: D-aminoacyl-tRNA deacylase (145 aa).

A Gly-cisPro motif, important for rejection of L-amino acids motif is present at residues 137–138 (GP).

This sequence belongs to the DTD family. In terms of assembly, homodimer.

It localises to the cytoplasm. It catalyses the reaction glycyl-tRNA(Ala) + H2O = tRNA(Ala) + glycine + H(+). The enzyme catalyses a D-aminoacyl-tRNA + H2O = a tRNA + a D-alpha-amino acid + H(+). Its function is as follows. An aminoacyl-tRNA editing enzyme that deacylates mischarged D-aminoacyl-tRNAs. Also deacylates mischarged glycyl-tRNA(Ala), protecting cells against glycine mischarging by AlaRS. Acts via tRNA-based rather than protein-based catalysis; rejects L-amino acids rather than detecting D-amino acids in the active site. By recycling D-aminoacyl-tRNA to D-amino acids and free tRNA molecules, this enzyme counteracts the toxicity associated with the formation of D-aminoacyl-tRNA entities in vivo and helps enforce protein L-homochirality. This is D-aminoacyl-tRNA deacylase from Cereibacter sphaeroides (strain ATCC 17029 / ATH 2.4.9) (Rhodobacter sphaeroides).